The chain runs to 146 residues: Transcriptional regulator MraZ (146 aa).

SpoVT-AbrB domains follow at residues 6–49 (TYDH…TEEE) and 78–121 (THEV…DQKS).

It belongs to the MraZ family. Forms oligomers.

It localises to the cytoplasm. It is found in the nucleoid. The protein is Transcriptional regulator MraZ of Mesoplasma florum (strain ATCC 33453 / NBRC 100688 / NCTC 11704 / L1) (Acholeplasma florum).